Consider the following 500-residue polypeptide: L-arabinose isomerase (500 aa).

Residues E306, E333, H350, and H450 each contribute to the Mn(2+) site.

This sequence belongs to the arabinose isomerase family. As to quaternary structure, homohexamer. Requires Mn(2+) as cofactor.

The enzyme catalyses beta-L-arabinopyranose = L-ribulose. It functions in the pathway carbohydrate degradation; L-arabinose degradation via L-ribulose; D-xylulose 5-phosphate from L-arabinose (bacterial route): step 1/3. Functionally, catalyzes the conversion of L-arabinose to L-ribulose. This is L-arabinose isomerase from Escherichia coli O139:H28 (strain E24377A / ETEC).